The following is a 205-amino-acid chain: uncharacterized protein (205 aa).

The HTH tetR-type domain occupies 11–71; that stretch reads DKRQAEILEA…RIIETGLDEG (61 aa). The H-T-H motif DNA-binding region spans 34–53; the sequence is TMKDVVEESGFSRGGVYLYF.

This is an uncharacterized protein from Bacillus subtilis (strain 168).